We begin with the raw amino-acid sequence, 345 residues long: Phosphoribosylformylglycinamidine cyclo-ligase (345 aa).

The protein belongs to the AIR synthase family.

The protein resides in the cytoplasm. The enzyme catalyses 2-formamido-N(1)-(5-O-phospho-beta-D-ribosyl)acetamidine + ATP = 5-amino-1-(5-phospho-beta-D-ribosyl)imidazole + ADP + phosphate + H(+). The protein operates within purine metabolism; IMP biosynthesis via de novo pathway; 5-amino-1-(5-phospho-D-ribosyl)imidazole from N(2)-formyl-N(1)-(5-phospho-D-ribosyl)glycinamide: step 2/2. This Synechococcus sp. (strain CC9902) protein is Phosphoribosylformylglycinamidine cyclo-ligase.